The sequence spans 699 residues: MTAIRGGSRRAPGLALALLGGVLLGACHGDENAQVNALPGFVSGSVRKTAYDGASDDLLTAGLGKTGLGSDTRPGFANPAQPSAAELRCLAIYSNYRALVDITPNGGYGRFWGPNVDLAGNDTLGEGKIAGTEYLAYSDDGSGRKNVTLLVQVPASFDPANPCIVTATASGSRGVYGAIAAAGEWGLKRGCAVAYNDKGGGNGAHEIGTGVVTLIDGTLATASSAGSSSLFTASESSSTLAAFNSAFPNRYAYKHAHSQQNPEQDWGRVTLQAVEFAYWALNEQFGPVVDGTRHGIRYRPGDITTIAASVSNGGGSALAAAEQDTRGWITAVVVGEPQINVRMTPGVTVEQGGAPVPSFGRPLADYATLANLLQPCAAAAVAATGAPYLSALPMGVTQSIRTQRCATLAAAGLVSGADTASQASDALAQLYAAGYLADSDLLQAPMWDSQAMPAIAVTYANAYTRSRVTDNLCNFSFATTNPVTGAVAAPAVSPMTNLFGAGNGVPPTNGINLVFNGASGGVDHRLATPDASFAGAFCLRQLWTANQLGIGTNVDAVRVAANLQHKPAIIVHGRSDALVPVNHASRAYVAQNSATEGRASQLSFYEVTNGQHFDAFLSVPGFDTRFVPVHYYDEQALNLMWNHLKSGAPLPPSQVIRTVPRGGVPGAAPALSTANLPPIVQSPGANAIAVNAGVIDVPL.

The signal sequence occupies residues 1 to 33; it reads MTAIRGGSRRAPGLALALLGGVLLGACHGDENA. Serine 311 functions as the Charge relay system in the catalytic mechanism.

Belongs to the D-(-)-3-hydroxybutyrate oligomer hydrolase family.

Its subcellular location is the secreted. The catalysed reaction is (3R)-hydroxybutanoate dimer + H2O = 2 (R)-3-hydroxybutanoate + H(+). Its pathway is lipid metabolism; butanoate metabolism. Its function is as follows. Participates in the degradation of poly-3-hydroxybutyrate (PHB). It works downstream of poly(3-hydroxybutyrate) depolymerase, hydrolyzing D(-)-3-hydroxybutyrate oligomers of various length (3HB-oligomers) into 3HB-monomers. This Burkholderia mallei (strain SAVP1) protein is D-(-)-3-hydroxybutyrate oligomer hydrolase.